The following is a 179-amino-acid chain: Shikimate kinase (179 aa).

22–27 (GTGKSS) provides a ligand contact to ATP. Residue Ser26 participates in Mg(2+) binding. 3 residues coordinate substrate: Asp44, Arg68, and Gly90. Arg128 serves as a coordination point for ATP. Arg147 lines the substrate pocket.

Belongs to the shikimate kinase family. As to quaternary structure, monomer. Requires Mg(2+) as cofactor.

It is found in the cytoplasm. The catalysed reaction is shikimate + ATP = 3-phosphoshikimate + ADP + H(+). It functions in the pathway metabolic intermediate biosynthesis; chorismate biosynthesis; chorismate from D-erythrose 4-phosphate and phosphoenolpyruvate: step 5/7. Catalyzes the specific phosphorylation of the 3-hydroxyl group of shikimic acid using ATP as a cosubstrate. This Geobacter metallireducens (strain ATCC 53774 / DSM 7210 / GS-15) protein is Shikimate kinase.